The sequence spans 284 residues: Nitrogenase iron protein 1 (284 aa).

17–24 (GKGGIGKS) serves as a coordination point for ATP. Cys-105 provides a ligand contact to [4Fe-4S] cluster. Arg-108 carries the post-translational modification ADP-ribosylarginine; by dinitrogenase reductase ADP-ribosyltransferase. Cys-140 serves as a coordination point for [4Fe-4S] cluster.

This sequence belongs to the NifH/BchL/ChlL family. Homodimer. It depends on [4Fe-4S] cluster as a cofactor. The reversible ADP-ribosylation of Arg-108 inactivates the nitrogenase reductase and regulates nitrogenase activity.

It carries out the reaction N2 + 8 reduced [2Fe-2S]-[ferredoxin] + 16 ATP + 16 H2O = H2 + 8 oxidized [2Fe-2S]-[ferredoxin] + 2 NH4(+) + 16 ADP + 16 phosphate + 6 H(+). The key enzymatic reactions in nitrogen fixation are catalyzed by the nitrogenase complex, which has 2 components: the iron protein and the molybdenum-iron protein. This chain is Nitrogenase iron protein 1 (nifH1), found in Methanothermococcus thermolithotrophicus (Methanococcus thermolithotrophicus).